The following is a 511-amino-acid chain: Lysine--tRNA ligase (511 aa).

Residues 1 to 20 (MQKNTSQPTNTNEQSNQPSL) are disordered. Residues Glu422 and Glu429 each contribute to the Mg(2+) site.

The protein belongs to the class-II aminoacyl-tRNA synthetase family. As to quaternary structure, homodimer. Mg(2+) serves as cofactor.

The protein localises to the cytoplasm. The enzyme catalyses tRNA(Lys) + L-lysine + ATP = L-lysyl-tRNA(Lys) + AMP + diphosphate. The chain is Lysine--tRNA ligase from Chlorobium chlorochromatii (strain CaD3).